The following is a 150-amino-acid chain: Large ribosomal subunit protein bL9 (150 aa).

Belongs to the bacterial ribosomal protein bL9 family.

In terms of biological role, binds to the 23S rRNA. This is Large ribosomal subunit protein bL9 from Pectobacterium carotovorum subsp. carotovorum (strain PC1).